A 288-amino-acid polypeptide reads, in one-letter code: Energy-coupling factor transporter ATP-binding protein EcfA2 (288 aa).

Residues 3–245 (IIVKNLTHIY…NASKLKDIGL (243 aa)) enclose the ABC transporter domain. 40–47 (GHTGSGKS) serves as a coordination point for ATP.

This sequence belongs to the ABC transporter superfamily. Energy-coupling factor EcfA family. Forms a stable energy-coupling factor (ECF) transporter complex composed of 2 membrane-embedded substrate-binding proteins (S component), 2 ATP-binding proteins (A component) and 2 transmembrane proteins (T component).

The protein resides in the cell membrane. Functionally, ATP-binding (A) component of a common energy-coupling factor (ECF) ABC-transporter complex. Unlike classic ABC transporters this ECF transporter provides the energy necessary to transport a number of different substrates. In Clostridioides difficile (strain 630) (Peptoclostridium difficile), this protein is Energy-coupling factor transporter ATP-binding protein EcfA2.